The sequence spans 186 residues: Alkyl hydroperoxide reductase AhpD (186 aa).

The Proton donor role is filled by C132. A disulfide bridge links C132 with C135. The Cysteine sulfenic acid (-SOH) intermediate role is filled by C135.

Belongs to the AhpD family.

The enzyme catalyses N(6)-[(R)-dihydrolipoyl]-L-lysyl-[lipoyl-carrier protein] + a hydroperoxide = N(6)-[(R)-lipoyl]-L-lysyl-[lipoyl-carrier protein] + an alcohol + H2O. Its function is as follows. Antioxidant protein with alkyl hydroperoxidase activity. Required for the reduction of the AhpC active site cysteine residues and for the regeneration of the AhpC enzyme activity. The chain is Alkyl hydroperoxide reductase AhpD from Anaeromyxobacter dehalogenans (strain 2CP-1 / ATCC BAA-258).